Reading from the N-terminus, the 448-residue chain is Solute carrier family 52, riboflavin transporter, member 1 (448 aa).

5 helical membrane-spanning segments follow: residues 14-34 (LLVA…WVEL), 47-67 (LPSY…VVTL), 79-99 (VPIQ…APLW), 124-144 (ACCT…PPFL), and 147-167 (FFLG…VQGV). An N-linked (GlcNAc...) asparagine glycan is attached at N178. The helical transmembrane segment at 191–211 (FPASTFFWALTALLVTSAAAF) threads the bilayer. The disordered stretch occupies residues 225–267 (TTGGSGPELQLGSPGAEEEEKEEEEALPLQEPPSQAAGTIPGP). Acidic residues predominate over residues 240–250 (AEEEEKEEEEA). 5 helical membrane-spanning segments follow: residues 280 to 300 (AFLL…LPSV), 315 to 335 (LAVV…MGVL), 342 to 362 (LVGL…LAIL), 369 to 389 (VGTT…LCVF), and 407 to 427 (ALLA…GAMF).

This sequence belongs to the riboflavin transporter family. Widely expressed. Highly expressed in the testis, placenta and small intestine. Expressed at lower level in other tissues.

Its subcellular location is the cell membrane. It catalyses the reaction riboflavin(in) = riboflavin(out). Its activity is regulated as follows. The activity is strongly inhibited by riboflavin analogs, such as lumiflavin. Weakly inhibited by flavin adenine dinucleotide (FAD). Its function is as follows. Plasma membrane transporter mediating the uptake by cells of the water soluble vitamin B2/riboflavin that plays a key role in biochemical oxidation-reduction reactions of the carbohydrate, lipid, and amino acid metabolism. Humans are unable to synthesize vitamin B2/riboflavin and must obtain it via intestinal absorption. In terms of biological role, (Microbial infection) May function as a cell receptor to retroviral envelopes similar to the porcine endogenous retrovirus (PERV-A). The chain is Solute carrier family 52, riboflavin transporter, member 1 from Homo sapiens (Human).